The sequence spans 349 residues: Transcriptional repressor protein KorB (349 aa).

Disordered stretches follow at residues 1–72 and 246–296; these read MSAK…SPES and RSHD…DKLK. The span at 25-40 shows a compositional bias: low complexity; sequence LGDLAGLLNEQPAANA. 2 stretches are compositionally biased toward basic and acidic residues: residues 246–256 and 279–296; these read RSHDDGDRDPN and DDAK…DKLK.

It belongs to the ParB family.

Its function is as follows. In conjunction with KorA, inhibits the transcription of the kilA, trfA and korAB operons. Is also involved in the negative control of the kilB operon. In Escherichia coli, this protein is Transcriptional repressor protein KorB (korB).